The following is a 372-amino-acid chain: NAD(P)H-quinone oxidoreductase subunit 1 (372 aa).

8 helical membrane passes run 27–47, 97–117, 128–148, 166–186, 204–224, 266–286, 308–328, and 347–367; these read LLWI…GVLV, VLFT…WLIV, VGIG…GLLM, AAQS…IVMM, FLSW…ICAL, VLSA…PISI, SLGI…AILL, and FLLP…LAFP.

The protein belongs to the complex I subunit 1 family. As to quaternary structure, NDH-1 is composed of at least 11 different subunits.

The protein localises to the cellular thylakoid membrane. The catalysed reaction is a plastoquinone + NADH + (n+1) H(+)(in) = a plastoquinol + NAD(+) + n H(+)(out). The enzyme catalyses a plastoquinone + NADPH + (n+1) H(+)(in) = a plastoquinol + NADP(+) + n H(+)(out). NDH-1 shuttles electrons from an unknown electron donor, via FMN and iron-sulfur (Fe-S) centers, to quinones in the respiratory and/or the photosynthetic chain. The immediate electron acceptor for the enzyme in this species is believed to be plastoquinone. Couples the redox reaction to proton translocation, and thus conserves the redox energy in a proton gradient. In Prochlorococcus marinus (strain NATL2A), this protein is NAD(P)H-quinone oxidoreductase subunit 1.